The primary structure comprises 268 residues: Small ribosomal subunit protein eS1 (268 aa).

The interval 1 to 21 is disordered; it reads MAVGKNKGLSKGGKKGGKKKV.

The protein belongs to the eukaryotic ribosomal protein eS1 family. As to quaternary structure, component of the small ribosomal subunit. Mature ribosomes consist of a small (40S) and a large (60S) subunit. The 40S subunit contains about 33 different proteins and 1 molecule of RNA (18S). The 60S subunit contains about 49 different proteins and 3 molecules of RNA (28S, 5.8S and 5S).

It localises to the cytoplasm. In terms of biological role, essential for oogenesis; required for late follicle cell development. In Drosophila virilis (Fruit fly), this protein is Small ribosomal subunit protein eS1.